A 184-amino-acid chain; its full sequence is ATP synthase subunit b, chloroplastic (184 aa).

A helical membrane pass occupies residues 27-49 (LATNPINLSVVFGVLIFFGKGVL).

Belongs to the ATPase B chain family. In terms of assembly, F-type ATPases have 2 components, F(1) - the catalytic core - and F(0) - the membrane proton channel. F(1) has five subunits: alpha(3), beta(3), gamma(1), delta(1), epsilon(1). F(0) has four main subunits: a(1), b(1), b'(1) and c(10-14). The alpha and beta chains form an alternating ring which encloses part of the gamma chain. F(1) is attached to F(0) by a central stalk formed by the gamma and epsilon chains, while a peripheral stalk is formed by the delta, b and b' chains.

Its subcellular location is the plastid. It is found in the chloroplast thylakoid membrane. Functionally, f(1)F(0) ATP synthase produces ATP from ADP in the presence of a proton or sodium gradient. F-type ATPases consist of two structural domains, F(1) containing the extramembraneous catalytic core and F(0) containing the membrane proton channel, linked together by a central stalk and a peripheral stalk. During catalysis, ATP synthesis in the catalytic domain of F(1) is coupled via a rotary mechanism of the central stalk subunits to proton translocation. Component of the F(0) channel, it forms part of the peripheral stalk, linking F(1) to F(0). This chain is ATP synthase subunit b, chloroplastic, found in Arabidopsis thaliana (Mouse-ear cress).